Reading from the N-terminus, the 447-residue chain is Acidic leucine-rich nuclear phosphoprotein 32-related protein (447 aa).

LRR repeat units follow at residues 49-70 (NLQHLSVANIGVSSLEQFPRLG), 71-90 (NLQKLILSDNRITVGLEFLV), and 96-117 (SFCDLDLSNNRIQFVEDLAPLA). Residues 129–167 (CPVTRLKDYRSRVFGLIKTLKYLDKTDAEGNERPESDDE) enclose the LRRCT domain. Residues 155-447 (DAEGNERPES…EDDDDDDEER (293 aa)) are disordered. Composition is skewed to acidic residues over residues 163 to 194 (ESDDEDDEEDEEDEEEEEEGDEEDPGSGEIDG) and 215 to 231 (VDVDEDEESDAEDDESE). The span at 232–242 (QATGVNGTSYR) shows a compositional bias: polar residues. 5 stretches are compositionally biased toward acidic residues: residues 256 to 277 (VREDDGDDSESGEEEVGEDNDV), 284 to 309 (EDSENEEDGVDDEEDDEEDEEEEEVD), 336 to 374 (GDDDEDGDGETGEDDQGVEDDGEFADEDDDVEEEDEESG), 397 to 415 (PINEDNDPDEEEEVEDDLP), and 433 to 447 (DDDDGEDDDDDDEER).

It belongs to the ANP32 family.

In Arabidopsis thaliana (Mouse-ear cress), this protein is Acidic leucine-rich nuclear phosphoprotein 32-related protein.